A 202-amino-acid polypeptide reads, in one-letter code: UPF0056 membrane protein PH0214 (202 aa).

6 helical membrane passes run 5-25, 47-67, 76-96, 104-124, 135-155, and 174-194; these read ILSS…ILLV, IGFI…QDIF, VAGG…GGMV, ILAL…AAIT, IIVS…LMMI, and IIGL…AGGI.

The protein belongs to the UPF0056 (MarC) family.

It localises to the cell membrane. This Pyrococcus horikoshii (strain ATCC 700860 / DSM 12428 / JCM 9974 / NBRC 100139 / OT-3) protein is UPF0056 membrane protein PH0214.